Reading from the N-terminus, the 215-residue chain is Ribonuclease HII (215 aa).

Residues 24–215 (GVVFGVDEVG…PIRQFYENVD (192 aa)) enclose the RNase H type-2 domain. Residues Asp30, Glu31, and Asp125 each contribute to the a divalent metal cation site.

This sequence belongs to the RNase HII family. The cofactor is Mn(2+). Mg(2+) serves as cofactor.

It is found in the cytoplasm. The enzyme catalyses Endonucleolytic cleavage to 5'-phosphomonoester.. Endonuclease that specifically degrades the RNA of RNA-DNA hybrids. The sequence is that of Ribonuclease HII from Zymomonas mobilis subsp. mobilis (strain ATCC 31821 / ZM4 / CP4).